A 351-amino-acid chain; its full sequence is Flap endonuclease 1 (351 aa).

The N-domain stretch occupies residues 1-98; that stretch reads MDLAELVEEI…QELERRKKVK (98 aa). Residues aspartate 27, aspartate 80, glutamate 154, glutamate 156, aspartate 175, aspartate 177, and aspartate 238 each coordinate Mg(2+). The segment at 118–260 is I-domain; the sequence is ELKKYAQMSI…TAYRIIKKYG (143 aa). Residues 343 to 351 are interaction with PCNA; sequence RQTGLDQWF.

It belongs to the XPG/RAD2 endonuclease family. FEN1 subfamily. Interacts with PCNA. PCNA stimulates the nuclease activity without altering cleavage specificity. It depends on Mg(2+) as a cofactor.

Its function is as follows. Structure-specific nuclease with 5'-flap endonuclease and 5'-3' exonuclease activities involved in DNA replication and repair. During DNA replication, cleaves the 5'-overhanging flap structure that is generated by displacement synthesis when DNA polymerase encounters the 5'-end of a downstream Okazaki fragment. Binds the unpaired 3'-DNA end and kinks the DNA to facilitate 5' cleavage specificity. Cleaves one nucleotide into the double-stranded DNA from the junction in flap DNA, leaving a nick for ligation. Also involved in the base excision repair (BER) pathway. Acts as a genome stabilization factor that prevents flaps from equilibrating into structures that lead to duplications and deletions. Also possesses 5'-3' exonuclease activity on nicked or gapped double-stranded DNA. This chain is Flap endonuclease 1, found in Sulfurisphaera tokodaii (strain DSM 16993 / JCM 10545 / NBRC 100140 / 7) (Sulfolobus tokodaii).